Consider the following 168-residue polypeptide: Endoribonuclease YbeY (168 aa).

Positions 132, 136, and 142 each coordinate Zn(2+).

Belongs to the endoribonuclease YbeY family. Zn(2+) is required as a cofactor.

Its subcellular location is the cytoplasm. In terms of biological role, single strand-specific metallo-endoribonuclease involved in late-stage 70S ribosome quality control and in maturation of the 3' terminus of the 16S rRNA. This chain is Endoribonuclease YbeY, found in Clostridium perfringens (strain SM101 / Type A).